We begin with the raw amino-acid sequence, 376 residues long: Protein-arginine rhamnosyltransferase (376 aa).

DTDP-beta-L-rhamnose contacts are provided by residues 13–16 (NYGD), tyrosine 192, 252–254 (MAQ), and 270–274 (RGEDS). DTDP is bound at residue 14–15 (YG). Catalysis depends on aspartate 16, which acts as the Proton acceptor. DTDP contacts are provided by residues tyrosine 192, 252 to 254 (MAQ), and 270 to 274 (RGEDS). The active site involves glutamate 272.

It belongs to the glycosyltransferase 104 family.

The catalysed reaction is dTDP-beta-L-rhamnose + L-arginyl-[protein] = N(omega)-(alpha-L-rhamnosyl)-L-arginyl-[protein] + dTDP + H(+). Protein-arginine rhamnosyltransferase that catalyzes the transfer of a single rhamnose to elongation factor P (EF-P) on 'Lys-32', a modification required for EF-P-dependent rescue of polyproline stalled ribosomes. This chain is Protein-arginine rhamnosyltransferase, found in Pseudomonas aeruginosa (strain ATCC 15692 / DSM 22644 / CIP 104116 / JCM 14847 / LMG 12228 / 1C / PRS 101 / PAO1).